The chain runs to 327 residues: Selenate reductase subunit beta (327 aa).

3 4Fe-4S ferredoxin-type domains span residues 6 to 35 (LAYV…RDGR), 124 to 155 (NHYF…KREE), and 157 to 186 (GLVV…FNLQ). Residues C15, C18, C21, C25, C133, C136, and C141 each contribute to the [4Fe-4S] cluster site. Positions 145, 166, and 172 each coordinate [3Fe-4S] cluster. Residues C176, C193, C196, C208, and C212 each coordinate [4Fe-4S] cluster.

Heterotrimer of alpha (SerA), beta (SerB) and gamma (SerC) subunits. Requires [3Fe-4S] cluster as cofactor. It depends on [4Fe-4S] cluster as a cofactor.

The protein localises to the periplasm. The catalysed reaction is selenite + 2 Fe(III)-[cytochrome c] + H2O = 2 Fe(II)-[cytochrome] + selenate + 2 H(+). Enzyme isolated from cells grown in a tungstate rich environment shows a 20-fold reduction in selenate reductase activity. In terms of biological role, component of the selenate reductase, which catalyzes the reduction of selenate to selenite and allows anaerobic growth with selenate as the sole terminal electron acceptor. A c-type di-heme cytochrome of the cytc4 family was shown to donate electrons to the selenate reductase in vitro. SerABC can also use reduced benzyl viologen or reduced methyl viologen as an electron donor. This subunit transfers electrons from SerC to SerA. The reductase is specific for selenate, and cannot reduce nitrate, nitrite, chlorate or sulfate. The protein is Selenate reductase subunit beta of Thauera selenatis.